The sequence spans 338 residues: Glyceraldehyde-3-phosphate dehydrogenase (338 aa).

Residues 11–12 and Gly-109 contribute to the NAD(+) site; that span reads TI. 138–140 contributes to the D-glyceraldehyde 3-phosphate binding site; sequence SCN. The Nucleophile role is filled by Cys-139. Arg-167 is a binding site for NAD(+). Residues Thr-169 and 192–193 contribute to the D-glyceraldehyde 3-phosphate site; that span reads HA. Gln-299 is an NAD(+) binding site.

It belongs to the glyceraldehyde-3-phosphate dehydrogenase family. Homotetramer.

The protein localises to the cytoplasm. It catalyses the reaction D-glyceraldehyde 3-phosphate + phosphate + NADP(+) = (2R)-3-phospho-glyceroyl phosphate + NADPH + H(+). The catalysed reaction is D-glyceraldehyde 3-phosphate + phosphate + NAD(+) = (2R)-3-phospho-glyceroyl phosphate + NADH + H(+). It participates in carbohydrate degradation; glycolysis; pyruvate from D-glyceraldehyde 3-phosphate: step 1/5. The polypeptide is Glyceraldehyde-3-phosphate dehydrogenase (Thermoplasma volcanium (strain ATCC 51530 / DSM 4299 / JCM 9571 / NBRC 15438 / GSS1)).